The following is a 248-amino-acid chain: Glutamine-binding periplasmic protein (248 aa).

Positions 1–22 are cleaved as a signal peptide; it reads MKSVLKVSLAALTLAFAVSSHA.

The protein belongs to the bacterial solute-binding protein 3 family.

It is found in the periplasm. In terms of biological role, involved in a glutamine-transport system GlnHPQ. The protein is Glutamine-binding periplasmic protein (glnH) of Escherichia coli O157:H7.